Consider the following 466-residue polypeptide: Protein tilB homolog (466 aa).

4 LRR repeats span residues 22 to 43 (SLEE…DKWC), 45 to 66 (DLKI…SKLK), 67 to 88 (KLEY…EGCE), and 89 to 110 (ELAK…KTLK). Residues 123–161 (NPCAFFDHYREFVVATLPQLKWLDGKGIEPSERIKALQE) enclose the LRRCT domain. The stretch at 178–204 (LKRAKLKEEAQRKHQEEDKNEDKRSNA) forms a coiled coil. 2 stretches are compositionally biased toward basic and acidic residues: residues 185 to 202 (EEAQ…DKRS) and 269 to 279 (EKQRKNQEKLS). Disordered regions lie at residues 185–206 (EEAQ…NAGF) and 269–288 (EKQR…VKPP). One can recognise a CS domain in the interval 301–396 (VNEPKIDFSL…GGQRAFTSVK (96 aa)). The disordered stretch occupies residues 418–466 (VDPSKHSFPDVTNIVQGKKHTPRRRPEPKIIPSEEDPTFEDNPEVPPLI). Residues 450–460 (SEEDPTFEDNP) are compositionally biased toward acidic residues.

The protein belongs to the tilB family. Interacts (via CS domain) with ZMYND10 (via C-terminus).

The protein localises to the cytoplasm. It localises to the cell projection. The protein resides in the cilium. Functionally, may play a role in dynein arm assembly, hence essential for proper axoneme building for cilia motility. The protein is Protein tilB homolog (LRCC6) of Macaca fascicularis (Crab-eating macaque).